The sequence spans 159 residues: Transcription elongation factor GreA (159 aa).

The stretch at 46–73 (AEYHAAKEEQSFVEGRIKEIELKLSRMQ) forms a coiled coil.

The protein belongs to the GreA/GreB family.

Its function is as follows. Necessary for efficient RNA polymerase transcription elongation past template-encoded arresting sites. The arresting sites in DNA have the property of trapping a certain fraction of elongating RNA polymerases that pass through, resulting in locked ternary complexes. Cleavage of the nascent transcript by cleavage factors such as GreA or GreB allows the resumption of elongation from the new 3'terminus. GreA releases sequences of 2 to 3 nucleotides. The protein is Transcription elongation factor GreA of Vesicomyosocius okutanii subsp. Calyptogena okutanii (strain HA).